The chain runs to 200 residues: Cytochrome c biogenesis ATP-binding export protein CcmA (200 aa).

Residues leucine 2–leucine 200 enclose the ABC transporter domain. Glycine 34–threonine 41 lines the ATP pocket.

The protein belongs to the ABC transporter superfamily. CcmA exporter (TC 3.A.1.107) family. In terms of assembly, the complex is composed of two ATP-binding proteins (CcmA) and two transmembrane proteins (CcmB).

Its subcellular location is the cell inner membrane. It carries out the reaction heme b(in) + ATP + H2O = heme b(out) + ADP + phosphate + H(+). Its function is as follows. Part of the ABC transporter complex CcmAB involved in the biogenesis of c-type cytochromes; once thought to export heme, this seems not to be the case, but its exact role is uncertain. Responsible for energy coupling to the transport system. In Legionella pneumophila, this protein is Cytochrome c biogenesis ATP-binding export protein CcmA.